A 425-amino-acid polypeptide reads, in one-letter code: Glutamate-1-semialdehyde 2,1-aminomutase (425 aa).

At K265 the chain carries N6-(pyridoxal phosphate)lysine.

The protein belongs to the class-III pyridoxal-phosphate-dependent aminotransferase family. HemL subfamily. In terms of assembly, homodimer. Requires pyridoxal 5'-phosphate as cofactor.

It localises to the cytoplasm. The enzyme catalyses (S)-4-amino-5-oxopentanoate = 5-aminolevulinate. Its pathway is porphyrin-containing compound metabolism; protoporphyrin-IX biosynthesis; 5-aminolevulinate from L-glutamyl-tRNA(Glu): step 2/2. This is Glutamate-1-semialdehyde 2,1-aminomutase from Clostridium perfringens (strain SM101 / Type A).